Consider the following 627-residue polypeptide: BURP domain-containing protein 12 (627 aa).

An N-terminal signal peptide occupies residues 1–25 (MASPPHLPLLLLLLVVVCNAAGGDG). Residues N119, N175, N251, N366, N384, and N530 are each glycosylated (N-linked (GlcNAc...) asparagine). Residues 415 to 626 (FFRETELVSG…FEGDMTWTVA (212 aa)) enclose the BURP domain.

In terms of tissue distribution, expressed in stems, leaves, shoot and panicles.

In Oryza sativa subsp. japonica (Rice), this protein is BURP domain-containing protein 12 (BURP12).